A 99-amino-acid chain; its full sequence is Integration host factor subunit alpha (99 aa).

It belongs to the bacterial histone-like protein family. Heterodimer of an alpha and a beta chain.

In terms of biological role, this protein is one of the two subunits of integration host factor, a specific DNA-binding protein that functions in genetic recombination as well as in transcriptional and translational control. This chain is Integration host factor subunit alpha, found in Xylella fastidiosa (strain M12).